We begin with the raw amino-acid sequence, 769 residues long: MLSNRAFGETIEDYEVQHLLGKGGFATVYKARCLHTHQDVAIKMIDKKLIQGTGLTSRVRQEVEIHSRLKHPSVLQLYTFFQDANYVYLVLELAHNGELHRYMNHIARPFTETEAASILKQVVAGLLYLHSHNIMHRDISLSNLLLSREMHVKIADFGLATQLKRPDERHMTMCGTPNYISPEVVSRSSHGLPADVWSVGCMLYTLLVGRPPFETDAVQSTLNKVVMSEYIMPAHLSYEAQDLINKLLKKLPHERITLEAVLCHPFMLKCSNGVHSAPGALNVFSQSMESGDSGIITFASSDSRNSQQIRSVENSGPQQVLPQIREEFKQVHHKLPYEQPGLFGQASTGLAEPNWPGAAKTSAFRMETGMVPNSKPASLKEDRISVPPLNTKRLLPTRYKTKNAIMSILRNGEVVLEFLKFRPTYNEDRINDICRISDDGQRIIIYQPDPGRGLPVREQPPDLQIPSGDCVYNYDNLPNKHWKKYIYGARFVGLVKSKTPKVTYFSTLGKCQLMETMTDFEIRFYSGAKLLKTPSEGLKVYDRNGMLLSDHSCSESRSLIEHGNECFTHCVNISNALEVAQTKDNSCFPVTIGRRPITDVQPAQRLDGLRDTTNIAFSTPKSNQGSINFSLSTISSTRNTSDFGTNCSRSNMLAAHQNIPIKRINVPDIGIATELSHGVVQVQFYDGSVVSVIPSMQGGGITYTQPNGTSTHFGKDDDLPFPVRDRVGQIPNIQLKLKTAPLLGSGRKTDYNNAMTPKTTTPYYNRMLL.

A Protein kinase domain is found at 14 to 267 (YEVQHLLGKG…LEAVLCHPFM (254 aa)). ATP-binding positions include 20–28 (LGKGGFATV) and lysine 43. Aspartate 138 functions as the Proton acceptor in the catalytic mechanism. Residues 381–498 (EDRISVPPLN…ARFVGLVKSK (118 aa)) enclose the Cryptic POLO box 1 (CPB1) domain. The region spanning 499-602 (TPKVTYFSTL…GRRPITDVQP (104 aa)) is the Cryptic POLO box 2 (CPB2) domain. In terms of domain architecture, POLO box spans 660 to 739 (PIKRINVPDI…IPNIQLKLKT (80 aa)).

This sequence belongs to the protein kinase superfamily. Ser/Thr protein kinase family. CDC5/Polo subfamily. As to quaternary structure, homodimer. Post-translationally, ubiquitinated by the SCF(Slimb) ubiquitin ligase complex; leading to its degradation by the proteasome during interphase and regulating centriole number and ensuring the block to centriole reduplication.

It is found in the cytoplasm. The protein localises to the cytoskeleton. It localises to the microtubule organizing center. The protein resides in the centrosome. Its subcellular location is the centriole. The catalysed reaction is L-seryl-[protein] + ATP = O-phospho-L-seryl-[protein] + ADP + H(+). The enzyme catalyses L-threonyl-[protein] + ATP = O-phospho-L-threonyl-[protein] + ADP + H(+). Functionally, serine/threonine-protein kinase that plays a central role in centriole duplication. Able to trigger procentriole formation on the surface of the mother centriole cylinder, using mother centriole as a platform, leading to the recruitment of centriole biogenesis proteins such as sas-6. When overexpressed, it is able to induce centrosome amplification through the simultaneous generation of multiple procentrioles adjoining each parental centriole during S phase. Centrosome amplification following overexpression can initiate tumorigenesis, highlighting the importance of centrosome regulation in cancers. The polypeptide is Serine/threonine-protein kinase PLK4 (SAK) (Drosophila simulans (Fruit fly)).